We begin with the raw amino-acid sequence, 320 residues long: tRNA (guanosine(34)-2'-O)-methyltransferase (320 aa).

Residues Gly53, Trp55, Asp81, Asp97, and Asp122 each coordinate S-adenosyl-L-methionine. Lys162 functions as the Proton acceptor in the catalytic mechanism.

It belongs to the class I-like SAM-binding methyltransferase superfamily. RNA methyltransferase RlmE family. TRM7 subfamily. Interacts with CG33172/WDR6.

The protein localises to the cytoplasm. The catalysed reaction is cytidine(32)/guanosine(34) in tRNA + 2 S-adenosyl-L-methionine = 2'-O-methylcytidine(32)/2'-O-methylguanosine(34) in tRNA + 2 S-adenosyl-L-homocysteine + 2 H(+). Functionally, methylates the 2'-O-ribose of nucleotides at position 34 of the tRNA anticodon loop of substrate tRNAs. May require WDR6 for methylation of the nucleotide at position 34 of the anticodon loop of substrate tRNAs. Plays a role in neurogenesis. Requisite for RNA-mediated gene silencing. Modifies position 34 in tRNA(Leu(CAA)), tRNA(Leu(CAG)), tRNA(Phe(GAA)), and tRNA(Trp(CCA)). This is tRNA (guanosine(34)-2'-O)-methyltransferase from Drosophila melanogaster (Fruit fly).